Here is a 179-residue protein sequence, read N- to C-terminus: Large ribosomal subunit protein uL6 (179 aa).

Belongs to the universal ribosomal protein uL6 family. As to quaternary structure, part of the 50S ribosomal subunit.

Its function is as follows. This protein binds to the 23S rRNA, and is important in its secondary structure. It is located near the subunit interface in the base of the L7/L12 stalk, and near the tRNA binding site of the peptidyltransferase center. In Solidesulfovibrio magneticus (strain ATCC 700980 / DSM 13731 / RS-1) (Desulfovibrio magneticus), this protein is Large ribosomal subunit protein uL6.